The following is a 58-amino-acid chain: UPF0391 membrane protein MADE_1011595 (58 aa).

Transmembrane regions (helical) follow at residues 4–24 (WAIT…GGIA) and 27–47 (ATGI…ISLI).

This sequence belongs to the UPF0391 family.

The protein localises to the cell membrane. This Alteromonas mediterranea (strain DSM 17117 / CIP 110805 / LMG 28347 / Deep ecotype) protein is UPF0391 membrane protein MADE_1011595.